A 651-amino-acid chain; its full sequence is UvrABC system protein C (651 aa).

Residues Thr-21–Val-100 form the GIY-YIG domain. Residues Asp-210–Leu-245 enclose the UVR domain.

It belongs to the UvrC family. As to quaternary structure, interacts with UvrB in an incision complex.

The protein resides in the cytoplasm. Its function is as follows. The UvrABC repair system catalyzes the recognition and processing of DNA lesions. UvrC both incises the 5' and 3' sides of the lesion. The N-terminal half is responsible for the 3' incision and the C-terminal half is responsible for the 5' incision. In Synechococcus sp. (strain CC9311), this protein is UvrABC system protein C.